The primary structure comprises 71 residues: MPIIKVRENEPFDVALRRFKRSCEKAGILAEIRRREFYEKPTTERKRAKASAVKRLAKKLTRENARRIRMY.

The protein belongs to the bacterial ribosomal protein bS21 family.

The sequence is that of Small ribosomal subunit protein bS21 from Buchnera aphidicola subsp. Acyrthosiphon pisum (strain 5A).